A 525-amino-acid chain; its full sequence is Cytochrome P450 monooxygenase bsc2 (525 aa).

A helical membrane pass occupies residues 12 to 32 (SLFILWLTTLLVSVLATAAYI). 2 N-linked (GlcNAc...) asparagine glycosylation sites follow: Asn86 and Asn317. Cys456 serves as a coordination point for heme.

It belongs to the cytochrome P450 family. Heme is required as a cofactor.

The protein localises to the membrane. Its pathway is mycotoxin biosynthesis. Functionally, cytochrome P450 monooxygenase; part of the gene cluster that mediates the biosynthesis of the diterpene glucoside brassicicene C. In the first step of the brassicicene C biosynthesis, the bifunctional diterpene synthase bsc8 that possesses both prenyl transferase and terpene cyclase activity, converts isopentenyl diphosphate and dimethylallyl diphosphate into geranylgeranyl diphosphate (GGDP) that is further converted into fusicocca-2,10(14)-diene, the first precursor for brassicicene C. Fusicocca-2,10(14)-diene is then substrate of cytochrome P450 monooxygenase bsc1 for hydroxylation at the C-8 position. Oxidation at C-16 position to aldehyde is then catalyzed by the cytochrome P450 monooyxygenase bsc7, yielding fusicocca-2,10(14)-diene-8-beta,16-diol. Follows the isomerization of the double bond and reduction of aldehyde to alcohol catalyzed by the short-chain dehydrogenase/reductase bsc3 to yield the diol compound fusicocca-1,10(14)-diene-8 beta,16-diol. The next step is the oxidation at the C-3 position of fusicocca-2,10(14)-diene-8-beta,16-diol catalyzed by the alpha-ketoglutarate dependent dioxygenase bsc9, to produce a triol compound. Methylation of the hydroxy group at position 16 is performed by the methyltransferase bsc6. 16-O-methylation is followed by oxidation at the C-13 position to ketone and an alkyl shift of the methyl group leads to brassicicene C. Although the probable acetyltransferase bsc4 is included in the gene cluster, no acetylation reactions are necessary for brassicicene C biosynthesis. However, the fact that brassicicene E, which is a structurally related compound having an acetoxy group at position 12, was previously isolated from another strain of A.brassicicola suggests that the ATCC 96836 strain might also produce a small amount of brassicicene E. This is Cytochrome P450 monooxygenase bsc2 from Alternaria brassicicola (Dark leaf spot agent).